Consider the following 231-residue polypeptide: Regulatory factor X-associated protein (231 aa).

The segment at 1 to 163 (MEAQAVPEGS…GNVKLEESTD (163 aa)) is disordered. The segment covering 50–65 (ADAEDEAGDDDADLLD) has biased composition (acidic residues). The segment covering 115–138 (KQRKPWMCKKHRNKMYKDKYKKKK) has biased composition (basic residues). A Nuclear localization signal motif is present at residues 123-138 (KKHRNKMYKDKYKKKK). Residue K157 forms a Glycyl lysine isopeptide (Lys-Gly) (interchain with G-Cter in SUMO2) linkage.

RFX consists of at least 3 different subunits; RFXAP, RFX5 and RFX-B/RFXANK; with each subunit representing a separate complementation group. RFX forms cooperative DNA binding complexes with X2BP and CBF/NF-Y. RFX associates with CIITA to form an active transcriptional complex. Phosphorylated.

The protein resides in the nucleus. Its function is as follows. Part of the RFX complex that binds to the X-box of MHC II promoters. This Mus musculus (Mouse) protein is Regulatory factor X-associated protein (Rfxap).